A 186-amino-acid chain; its full sequence is MFIKANADGYALALYDLHKEEKHVSSTYENILSFYELLSNDKEVFSFFNSSKIGLEEKHKIADELVQENKNLKTFANFLKLLISKNNSPLLLQALSIYIRLVESELNILRAKLISAFEIDNQTKIKIIEKLENKYNKKIKLTTFIDKSLIFGFKIVIGNDIIEQNAKADLEKISSLINNKNGDLNG.

It belongs to the ATPase delta chain family. As to quaternary structure, F-type ATPases have 2 components, F(1) - the catalytic core - and F(0) - the membrane proton channel. F(1) has five subunits: alpha(3), beta(3), gamma(1), delta(1), epsilon(1). F(0) has three main subunits: a(1), b(2) and c(10-14). The alpha and beta chains form an alternating ring which encloses part of the gamma chain. F(1) is attached to F(0) by a central stalk formed by the gamma and epsilon chains, while a peripheral stalk is formed by the delta and b chains.

It is found in the cell membrane. F(1)F(0) ATP synthase produces ATP from ADP in the presence of a proton or sodium gradient. F-type ATPases consist of two structural domains, F(1) containing the extramembraneous catalytic core and F(0) containing the membrane proton channel, linked together by a central stalk and a peripheral stalk. During catalysis, ATP synthesis in the catalytic domain of F(1) is coupled via a rotary mechanism of the central stalk subunits to proton translocation. Functionally, this protein is part of the stalk that links CF(0) to CF(1). It either transmits conformational changes from CF(0) to CF(1) or is implicated in proton conduction. The protein is ATP synthase subunit delta of Mycoplasmopsis agalactiae (strain NCTC 10123 / CIP 59.7 / PG2) (Mycoplasma agalactiae).